We begin with the raw amino-acid sequence, 350 residues long: Biotin synthase 1 (350 aa).

Positions 71–296 (EEVEVEGIIS…KTILRFAGGR (226 aa)) constitute a Radical SAM core domain. Positions 86, 90, and 93 each coordinate [4Fe-4S] cluster. The [2Fe-2S] cluster site is built by cysteine 129, cysteine 221, and arginine 291.

The protein belongs to the radical SAM superfamily. Biotin synthase family. In terms of assembly, homodimer. [4Fe-4S] cluster serves as cofactor. Requires [2Fe-2S] cluster as cofactor.

It catalyses the reaction (4R,5S)-dethiobiotin + (sulfur carrier)-SH + 2 reduced [2Fe-2S]-[ferredoxin] + 2 S-adenosyl-L-methionine = (sulfur carrier)-H + biotin + 2 5'-deoxyadenosine + 2 L-methionine + 2 oxidized [2Fe-2S]-[ferredoxin]. It functions in the pathway cofactor biosynthesis; biotin biosynthesis; biotin from 7,8-diaminononanoate: step 2/2. Its function is as follows. Catalyzes the conversion of dethiobiotin (DTB) to biotin by the insertion of a sulfur atom into dethiobiotin via a radical-based mechanism. The protein is Biotin synthase 1 of Corynebacterium diphtheriae (strain ATCC 700971 / NCTC 13129 / Biotype gravis).